Consider the following 421-residue polypeptide: Tyrosine--tRNA ligase (421 aa).

L-tyrosine is bound at residue Y36. The 'HIGH' region signature appears at 41 to 50 (PTADSLHIGH). L-tyrosine is bound by residues Y170 and Q174. The short motif at 231-235 (KFGKS) is the 'KMSKS' region element. An ATP-binding site is contributed by K234. Positions 353 to 420 (TNIVEALIET…KKKYFMVNYQ (68 aa)) constitute an S4 RNA-binding domain.

This sequence belongs to the class-I aminoacyl-tRNA synthetase family. TyrS type 1 subfamily. As to quaternary structure, homodimer.

It localises to the cytoplasm. The enzyme catalyses tRNA(Tyr) + L-tyrosine + ATP = L-tyrosyl-tRNA(Tyr) + AMP + diphosphate + H(+). Its function is as follows. Catalyzes the attachment of tyrosine to tRNA(Tyr) in a two-step reaction: tyrosine is first activated by ATP to form Tyr-AMP and then transferred to the acceptor end of tRNA(Tyr). The protein is Tyrosine--tRNA ligase of Staphylococcus epidermidis (strain ATCC 35984 / DSM 28319 / BCRC 17069 / CCUG 31568 / BM 3577 / RP62A).